Here is a 157-residue protein sequence, read N- to C-terminus: Small ribosomal subunit protein uS7 (157 aa).

The protein belongs to the universal ribosomal protein uS7 family. Part of the 30S ribosomal subunit. Contacts proteins S9 and S11.

Functionally, one of the primary rRNA binding proteins, it binds directly to 16S rRNA where it nucleates assembly of the head domain of the 30S subunit. Is located at the subunit interface close to the decoding center, probably blocks exit of the E-site tRNA. This is Small ribosomal subunit protein uS7 from Chloroflexus aurantiacus (strain ATCC 29366 / DSM 635 / J-10-fl).